A 534-amino-acid polypeptide reads, in one-letter code: Nuclear polyadenylated RNA-binding protein 4 (534 aa).

Residues Met1 to Leu154 are disordered. Phosphoserine occurs at positions 2 and 3. A compositionally biased stretch (basic and acidic residues) spans Gly13 to Asn30. Over residues Ser37–Asp78 the composition is skewed to low complexity. Phosphoserine is present on residues Ser51 and Ser87. Residues Ala81–Glu98 show a composition bias toward basic and acidic residues. Composition is skewed to low complexity over residues Ser99–Ala112 and Gln121–Gln144. Residues Thr145 to Leu154 show a composition bias toward basic and acidic residues. RRM domains are found at residues Cys159–Lys241 and Gly243–Pro320. The residue at position 206 (Ser206) is a Phosphoserine. Disordered stretches follow at residues Lys316 to Gln354 and Met415 to Arg534. Residues Gly336–Gln354 show a composition bias toward low complexity. A compositionally biased stretch (polar residues) spans Met420 to Asp459. Thr458 is subject to Phosphothreonine. 2 positions are modified to phosphoserine: Ser460 and Ser462. Residues Ser460 to Ser475 are compositionally biased toward low complexity. Basic and acidic residues predominate over residues Asn478 to His505. Arg519 bears the Omega-N-methylarginine mark. The segment covering Asn523–Arg534 has biased composition (low complexity).

As to quaternary structure, interacts with NAM7. Post-translationally, methylated by HMT1. The methylation is required for nuclear export.

The protein resides in the cytoplasm. It localises to the nucleus. It is found in the stress granule. Functionally, RNA-binding protein, which is involved in the polyadenylation-dependent pre-mRNA 3'-end formation and cooperates with the cleavage factor CFIA complex and the cleavage and polyadenylation factor (CPF) complex. May be involved in regulation of poly(A) site selection. Is involved in nonsense-mediated mRNA decay. Seems to bind to an RNA downstream sequence element (DSE) located 3' of a nonsense codon and may mark the transcript for decay. This Saccharomyces cerevisiae (strain ATCC 204508 / S288c) (Baker's yeast) protein is Nuclear polyadenylated RNA-binding protein 4.